The chain runs to 124 residues: Small ribosomal subunit protein uS12 (124 aa).

The residue at position 89 (D89) is a 3-methylthioaspartic acid. The interval 103–124 (DTAGVQKRRQGRSKYGAKRPKS) is disordered. Positions 108–124 (QKRRQGRSKYGAKRPKS) are enriched in basic residues.

The protein belongs to the universal ribosomal protein uS12 family. In terms of assembly, part of the 30S ribosomal subunit. Contacts proteins S8 and S17. May interact with IF1 in the 30S initiation complex.

Functionally, with S4 and S5 plays an important role in translational accuracy. Its function is as follows. Interacts with and stabilizes bases of the 16S rRNA that are involved in tRNA selection in the A site and with the mRNA backbone. Located at the interface of the 30S and 50S subunits, it traverses the body of the 30S subunit contacting proteins on the other side and probably holding the rRNA structure together. The combined cluster of proteins S8, S12 and S17 appears to hold together the shoulder and platform of the 30S subunit. This chain is Small ribosomal subunit protein uS12, found in Methylococcus capsulatus (strain ATCC 33009 / NCIMB 11132 / Bath).